A 167-amino-acid chain; its full sequence is Secreted LysM effector Blys6 (167 aa).

The first 16 residues, 1–16 (MKGLCVAACTLVLAAA), serve as a signal peptide directing secretion. The 54-residue stretch at 109–162 (KWYRIRRGDDCGPVASEFGISADQLIEWNPWLSADVDGTHYPCMNIWPTDNLCV) folds into the LysM domain.

Belongs to the secreted LysM effector family.

Functionally, might have a role in sequestration of chitin oligosaccharides (breakdown products of fungal cell walls that are released during invasion and act as triggers of host immunity) to dampen host defense. This Beauveria bassiana (strain ARSEF 2860) (White muscardine disease fungus) protein is Secreted LysM effector Blys6.